The sequence spans 438 residues: Trigger factor (438 aa).

A PPIase FKBP-type domain is found at 163–248; that stretch reads GEIAVLDFAA…VHAVKERKLP (86 aa).

The protein belongs to the FKBP-type PPIase family. Tig subfamily.

It is found in the cytoplasm. It carries out the reaction [protein]-peptidylproline (omega=180) = [protein]-peptidylproline (omega=0). Functionally, involved in protein export. Acts as a chaperone by maintaining the newly synthesized protein in an open conformation. Functions as a peptidyl-prolyl cis-trans isomerase. The sequence is that of Trigger factor from Oleidesulfovibrio alaskensis (strain ATCC BAA-1058 / DSM 17464 / G20) (Desulfovibrio alaskensis).